The primary structure comprises 466 residues: Asparagine--tRNA ligase (466 aa).

This sequence belongs to the class-II aminoacyl-tRNA synthetase family. In terms of assembly, homodimer.

The protein resides in the cytoplasm. The catalysed reaction is tRNA(Asn) + L-asparagine + ATP = L-asparaginyl-tRNA(Asn) + AMP + diphosphate + H(+). The protein is Asparagine--tRNA ligase of Buchnera aphidicola subsp. Acyrthosiphon pisum (strain APS) (Acyrthosiphon pisum symbiotic bacterium).